Consider the following 181-residue polypeptide: Large ribosomal subunit protein uL5 (181 aa).

The protein belongs to the universal ribosomal protein uL5 family. Part of the 50S ribosomal subunit; part of the 5S rRNA/L5/L18/L25 subcomplex. Contacts the 5S rRNA and the P site tRNA. Forms a bridge to the 30S subunit in the 70S ribosome.

In terms of biological role, this is one of the proteins that bind and probably mediate the attachment of the 5S RNA into the large ribosomal subunit, where it forms part of the central protuberance. In the 70S ribosome it contacts protein S13 of the 30S subunit (bridge B1b), connecting the 2 subunits; this bridge is implicated in subunit movement. Contacts the P site tRNA; the 5S rRNA and some of its associated proteins might help stabilize positioning of ribosome-bound tRNAs. This Picosynechococcus sp. (strain ATCC 27264 / PCC 7002 / PR-6) (Agmenellum quadruplicatum) protein is Large ribosomal subunit protein uL5.